A 62-amino-acid chain; its full sequence is Large ribosomal subunit protein bL32 (62 aa).

Positions 28–62 are disordered; that stretch reads SIEPTTGEVHRRHHISPDGFYRGRQVIKAKEQDEE.

The protein belongs to the bacterial ribosomal protein bL32 family.

This is Large ribosomal subunit protein bL32 from Thioalkalivibrio sulfidiphilus (strain HL-EbGR7).